A 336-amino-acid polypeptide reads, in one-letter code: MPSATESKPETRKVVSIVGPTASGKTGLGIAIAKALEAKGEQAEIVNADAYQMYKGMDIGTAKASPEEQAEVRHHLIDIIEPDDAMSVARFQEIARAKIAELQAREVRPILVGGSGLYARAAIDDISFPGTDPEVRKRLEEREKVEGAGALFDELKTKDPEAAARMDPHNPRRTIRALEVIEVTGRPYSASLPHYRYVIPTVQIGLDLPREELDRRIDIRTKQMLENGFVEEVERIRPRLGITAGKALGYQQVVDYLDGLCDLNDTFMSIAQKTKRLARKQMGWFGRDPRIHWLQALNPALLGNAMAIIEHADAGDYDAIDAQADAYTQHHLGDIA.

19 to 26 contacts ATP; that stretch reads GPTASGKT. 21 to 26 lines the substrate pocket; it reads TASGKT.

This sequence belongs to the IPP transferase family. Monomer. The cofactor is Mg(2+).

The enzyme catalyses adenosine(37) in tRNA + dimethylallyl diphosphate = N(6)-dimethylallyladenosine(37) in tRNA + diphosphate. Catalyzes the transfer of a dimethylallyl group onto the adenine at position 37 in tRNAs that read codons beginning with uridine, leading to the formation of N6-(dimethylallyl)adenosine (i(6)A). This is tRNA dimethylallyltransferase from Bifidobacterium adolescentis (strain ATCC 15703 / DSM 20083 / NCTC 11814 / E194a).